A 266-amino-acid chain; its full sequence is Proline-rich protein 23A (266 aa).

A compositionally biased stretch (low complexity) spans 1-18 (MGSRPRSPSAFPAPWWGQ). Disordered regions lie at residues 1 to 47 (MGSR…SLED) and 197 to 266 (EPCA…LFQE). Over residues 227–238 (PSSPLQPLPPSP) the composition is skewed to pro residues. Positions 255–266 (PPCKARRRLFQE) are enriched in basic residues.

Belongs to the PRR23 family.

The chain is Proline-rich protein 23A (PRR23A) from Homo sapiens (Human).